A 395-amino-acid polypeptide reads, in one-letter code: Phosphoserine aminotransferase (395 aa).

Position 20 is a phosphothreonine (Thr20). A pyridoxal 5'-phosphate-binding site is contributed by 80-81; it reads GT. At Ser112 the chain carries Phosphoserine. Pyridoxal 5'-phosphate contacts are provided by Trp113, Thr170, Asp194, and Gln217. Lys218 carries the post-translational modification N6-(pyridoxal phosphate)lysine. Position 271–272 (271–272) interacts with pyridoxal 5'-phosphate; the sequence is NT.

Belongs to the class-V pyridoxal-phosphate-dependent aminotransferase family. SerC subfamily. As to quaternary structure, homodimer. The cofactor is pyridoxal 5'-phosphate.

It carries out the reaction O-phospho-L-serine + 2-oxoglutarate = 3-phosphooxypyruvate + L-glutamate. It catalyses the reaction 4-(phosphooxy)-L-threonine + 2-oxoglutarate = (R)-3-hydroxy-2-oxo-4-phosphooxybutanoate + L-glutamate. It functions in the pathway amino-acid biosynthesis; L-serine biosynthesis; L-serine from 3-phospho-D-glycerate: step 2/3. In terms of biological role, phosphoserine aminotransferase (PSAT) is a pyridoxal 5'-phosphate-dependent enzyme involved in the second step of the phosphorylated pathway of serine biosynthesis. Catalyzes the reversible conversion of 3-phosphohydroxypyruvate to phosphoserine and of 3-hydroxy-2-oxo-4-phosphonooxybutanoate to phosphohydroxythreonine. Plays an indirect role in purine biosynthesis. The chain is Phosphoserine aminotransferase from Saccharomyces cerevisiae (strain ATCC 204508 / S288c) (Baker's yeast).